The sequence spans 171 residues: Nudix hydrolase DR_0079 (171 aa).

The Nudix hydrolase domain occupies 32–162 (ERVRVVNAFL…EAAKGDLAEL (131 aa)). Residues 69–91 (GGAVQSGETYEEAFRREAREELN) carry the Nudix box motif. E85 and E89 together coordinate Mg(2+).

This sequence belongs to the Nudix hydrolase family. In terms of assembly, monomer. The cofactor is Mg(2+).

Its activity is regulated as follows. Inhibited by zinc, calcium or copper ions. In terms of biological role, hydrolase that converts various nucleotide triphosphates (NTPs) to the corresponding nucleotide monophosphates and diphosphate, and nucleotide diphosphates to nucleotide monophosphates and inorganic phosphate. Has a marked preference for cytosine ribonucleoside 5'-diphosphate (CDP) and cytosine ribonucleoside 5'-triphosphate (CTP). Has lower activity towards the deoxyribose nucleotides dCDP and dCTP, and towards dGDP, TDP and UDP. This is Nudix hydrolase DR_0079 from Deinococcus radiodurans (strain ATCC 13939 / DSM 20539 / JCM 16871 / CCUG 27074 / LMG 4051 / NBRC 15346 / NCIMB 9279 / VKM B-1422 / R1).